A 232-amino-acid polypeptide reads, in one-letter code: Phosphatidylserine decarboxylase proenzyme (232 aa).

Serine 190 functions as the Schiff-base intermediate with substrate; via pyruvic acid in the catalytic mechanism. At serine 190 the chain carries Pyruvic acid (Ser); by autocatalysis.

Belongs to the phosphatidylserine decarboxylase family. PSD-A subfamily. In terms of assembly, heterodimer of a large membrane-associated beta subunit and a small pyruvoyl-containing alpha subunit. Pyruvate serves as cofactor. In terms of processing, is synthesized initially as an inactive proenzyme. Formation of the active enzyme involves a self-maturation process in which the active site pyruvoyl group is generated from an internal serine residue via an autocatalytic post-translational modification. Two non-identical subunits are generated from the proenzyme in this reaction, and the pyruvate is formed at the N-terminus of the alpha chain, which is derived from the carboxyl end of the proenzyme. The post-translation cleavage follows an unusual pathway, termed non-hydrolytic serinolysis, in which the side chain hydroxyl group of the serine supplies its oxygen atom to form the C-terminus of the beta chain, while the remainder of the serine residue undergoes an oxidative deamination to produce ammonia and the pyruvoyl prosthetic group on the alpha chain.

It localises to the cell membrane. It carries out the reaction a 1,2-diacyl-sn-glycero-3-phospho-L-serine + H(+) = a 1,2-diacyl-sn-glycero-3-phosphoethanolamine + CO2. Its pathway is phospholipid metabolism; phosphatidylethanolamine biosynthesis; phosphatidylethanolamine from CDP-diacylglycerol: step 2/2. In terms of biological role, catalyzes the formation of phosphatidylethanolamine (PtdEtn) from phosphatidylserine (PtdSer). This chain is Phosphatidylserine decarboxylase proenzyme, found in Rhodopseudomonas palustris (strain BisB5).